A 526-amino-acid chain; its full sequence is Peptide chain release factor 3 (526 aa).

The tr-type G domain occupies 8-277; the sequence is GKRRTFAIIS…GLTDWAPAPQ (270 aa). GTP-binding positions include 17-24, 85-89, and 139-142; these read SHPDAGKT, DTPGH, and NKLD.

It belongs to the TRAFAC class translation factor GTPase superfamily. Classic translation factor GTPase family. PrfC subfamily.

Its subcellular location is the cytoplasm. Increases the formation of ribosomal termination complexes and stimulates activities of RF-1 and RF-2. It binds guanine nucleotides and has strong preference for UGA stop codons. It may interact directly with the ribosome. The stimulation of RF-1 and RF-2 is significantly reduced by GTP and GDP, but not by GMP. In Aliivibrio fischeri (strain MJ11) (Vibrio fischeri), this protein is Peptide chain release factor 3.